Consider the following 159-residue polypeptide: Keratin-associated protein 11-1 (159 aa).

4 tandem repeats follow at residues 107-116, 117-126, 127-136, and 137-146. The 4 X 10 AA approximate repeats stretch occupies residues 107-146; that stretch reads CQPLSGVSTVCKPVRSISTVCQPVGGVSTICQPTCGVSRT.

This sequence belongs to the PMG family. In terms of tissue distribution, wool.

In the wool cortex, wool keratin intermediate filaments are embedded in an interfilamentous matrix, consisting of wool keratin-associated proteins (KRTAP), which are essential for the formation of a rigid and resistant wool shaft through their extensive disulfide bond cross-linking with abundant cysteine residues of wool keratins. The matrix proteins include the high-sulfur and high-glycine-tyrosine keratins. The polypeptide is Keratin-associated protein 11-1 (KRTAP11-1) (Capra hircus (Goat)).